The following is a 131-amino-acid chain: Acanthoscurrin-2 (131 aa).

Lys-130 is subject to Lysine amide.

As to expression, expressed in hemocytes and secreted into the plasma following bacterial immune challenge.

It localises to the secreted. In terms of biological role, antimicrobial protein. Strong activity against the Gram-negative bacterium E.coli SBS363 and yeast C.albicans. No detectable activity against the Gram-positive bacterium M.luteus. The polypeptide is Acanthoscurrin-2 (Acanthoscurria gomesiana (Tarantula spider)).